Here is a 164-residue protein sequence, read N- to C-terminus: NADH-quinone oxidoreductase subunit I (164 aa).

4Fe-4S ferredoxin-type domains are found at residues 55–85 (LRRYPNGEERCIACKLCEAICPAQAITIDAE) and 95–124 (TRYDIDMTKCIYCGFCQEACPVDAIVEGPN). [4Fe-4S] cluster is bound by residues Cys65, Cys68, Cys71, Cys75, Cys104, Cys107, Cys110, and Cys114.

Belongs to the complex I 23 kDa subunit family. As to quaternary structure, NDH-1 is composed of 14 different subunits. Subunits NuoA, H, J, K, L, M, N constitute the membrane sector of the complex. [4Fe-4S] cluster is required as a cofactor.

The protein resides in the cell inner membrane. The enzyme catalyses a quinone + NADH + 5 H(+)(in) = a quinol + NAD(+) + 4 H(+)(out). NDH-1 shuttles electrons from NADH, via FMN and iron-sulfur (Fe-S) centers, to quinones in the respiratory chain. The immediate electron acceptor for the enzyme in this species is believed to be ubiquinone. Couples the redox reaction to proton translocation (for every two electrons transferred, four hydrogen ions are translocated across the cytoplasmic membrane), and thus conserves the redox energy in a proton gradient. The sequence is that of NADH-quinone oxidoreductase subunit I from Dinoroseobacter shibae (strain DSM 16493 / NCIMB 14021 / DFL 12).